A 515-amino-acid chain; its full sequence is Aldehyde dehydrogenase (515 aa).

Polar residues predominate over residues 1–12 (MTVAEQQPQHQG). The disordered stretch occupies residues 1-20 (MTVAEQQPQHQGYANPGTPG). NAD(+) is bound at residue 228–234 (GFGLEAG). Catalysis depends on residues Glu-272 and Cys-311.

The protein belongs to the aldehyde dehydrogenase family.

The catalysed reaction is an aldehyde + NAD(+) + H2O = a carboxylate + NADH + 2 H(+). In Deinococcus radiodurans (strain ATCC 13939 / DSM 20539 / JCM 16871 / CCUG 27074 / LMG 4051 / NBRC 15346 / NCIMB 9279 / VKM B-1422 / R1), this protein is Aldehyde dehydrogenase (aldA).